The chain runs to 80 residues: Putative membrane protein insertion efficiency factor (80 aa).

It belongs to the UPF0161 family.

It localises to the cell membrane. Functionally, could be involved in insertion of integral membrane proteins into the membrane. The protein is Putative membrane protein insertion efficiency factor of Shouchella clausii (strain KSM-K16) (Alkalihalobacillus clausii).